The primary structure comprises 214 residues: Cell division protein SepF (214 aa).

The interval 23–70 is disordered; it reads YYDDRAPSRGFPRPRFDDGYGRYDGDDYDDPRREPADYPPPAGYRGGY. Positions 36–58 are enriched in basic and acidic residues; sequence PRFDDGYGRYDGDDYDDPRREPA.

It belongs to the SepF family. As to quaternary structure, homodimer. Interacts with FtsZ.

It localises to the cytoplasm. Its function is as follows. Cell division protein that is part of the divisome complex and is recruited early to the Z-ring. Probably stimulates Z-ring formation, perhaps through the cross-linking of FtsZ protofilaments. Its function overlaps with FtsA. In Mycobacterium avium (strain 104), this protein is Cell division protein SepF.